The sequence spans 361 residues: Histidinol-phosphate aminotransferase (361 aa).

Lysine 218 bears the N6-(pyridoxal phosphate)lysine mark.

The protein belongs to the class-II pyridoxal-phosphate-dependent aminotransferase family. Histidinol-phosphate aminotransferase subfamily. Homodimer. It depends on pyridoxal 5'-phosphate as a cofactor.

The enzyme catalyses L-histidinol phosphate + 2-oxoglutarate = 3-(imidazol-4-yl)-2-oxopropyl phosphate + L-glutamate. It participates in amino-acid biosynthesis; L-histidine biosynthesis; L-histidine from 5-phospho-alpha-D-ribose 1-diphosphate: step 7/9. This chain is Histidinol-phosphate aminotransferase, found in Dinoroseobacter shibae (strain DSM 16493 / NCIMB 14021 / DFL 12).